Consider the following 296-residue polypeptide: Polyadenylate-binding protein 2-A (296 aa).

The disordered stretch occupies residues 1–106; sequence MAAVSSVASL…GELTGDQTIE (106 aa). Gly residues predominate over residues 71-82; the sequence is GRGGSGGGGAGG. A compositionally biased stretch (acidic residues) spans 84–97; the sequence is EELEDEELEEEEPG. Residues 107 to 141 are a coiled coil; it reads DPELEAIKARVREMEEEAEKLKELQNEVEKQMNMS. Positions 146 to 296 are necessary for homooligomerization; the sequence is NAGPVIMSVE…ARATSWYTPY (151 aa). An RRM domain is found at 163-240; that stretch reads RSIYVGNVDY…RQIKVVPKRT (78 aa).

In terms of assembly, monomer and homooligomer. Binds RNA as a monomer and oligomerizes when bound to poly(A). Shows dynamic spatial expression throughout development. First expressed in the animal pole region of the egg and this pattern persists through to the blastula stage. In gastrula and neurula embryos, expressed mainly in ectodermal, neural and epidermal regions. Neural tissue-specific expression pattern persists into tailbud stage when expression is localized to the brain and spinal cord. At early tadpole stage, expression becomes gradually confined to the specific vesicle regions of the developing brain. At stage 39, expressed in the telencephalon and mesencephalon regions of the brain. Also detected in the eye and olfactory pit at the tadpole stage. Expressed during gut endoderm development. At stage 35, expressed exclusively in the anterior portion of the gut endoderm, which includes the prospective liver, stomach and pancreas. As development proceeds, expression becomes restricted to the pancreas, and by stage 46/47 (the seventh day of development) expression is localized exclusively to the pancreas. Expressed in most adult tissues.

The protein localises to the nucleus. The protein resides in the cytoplasm. Involved in the 3'-end formation of mRNA precursors (pre-mRNA) by the addition of a poly(A) tail of 200-250 nt to the upstream cleavage product. Stimulates poly(A) polymerase (PAPOLA) conferring processivity on the poly(A) tail elongation reaction and also controls the poly(A) tail length. Increases the affinity of poly(A) polymerase for RNA. Binds to poly(A) and to poly(G) with high affinity. May protect the poly(A) tail from degradation. The chain is Polyadenylate-binding protein 2-A (pabpn1-a) from Xenopus laevis (African clawed frog).